A 369-amino-acid polypeptide reads, in one-letter code: MQTNNPSYFFRSESALQDEKRKEEKSHNPNGNPRNLKAKILNIELDRTTPKKKQFPRLFVCEASHICKLYDLEINKTCKTYKGHSGPVTCCQIESLRKDGKVRHIYTGSWDHTIKKWNVSTGECVETLIGHTDYVKCLLLLEEEGLLLSGSTDASLIVWDVSSQPSRLLYKLTGHSRGIECITRQPNTDIFWTCGSESSIRCWHITKVGGSQLEEEGFWGHQSNVYCLLFDPQDSEALWTASADKTVREWSLYQGIHEETRMEHPDVCTDVLTLADGNIATACRDEEIRVWDTTTGNVKDIYSGHYESVTKILQWKSYLISSSLDQTIRVWDLEYSADNNEADDHPSLGPPSTKLTAEELAELEELMND.

The tract at residues 1–35 (MQTNNPSYFFRSESALQDEKRKEEKSHNPNGNPRN) is disordered. Residues 17 to 27 (QDEKRKEEKSH) show a composition bias toward basic and acidic residues. 6 WD repeats span residues 83-127 (GHSG…CVET), 130-169 (GHTD…SRLL), 174-213 (GHSR…GSQL), 220-260 (GHQS…HEET), 263-301 (EHPD…VKDI), and 304-341 (GHYE…DNNE).

This is an uncharacterized protein from Schizosaccharomyces pombe (strain 972 / ATCC 24843) (Fission yeast).